The following is a 92-amino-acid chain: MSTSDFEERVVTVPLRDANDKPIQERADFAMKIVREHLAQHFSVDEAEVVLDTTVNEAVWANGRQNPPSKVRVRAARFVEDGEPVVEAEYAE.

It belongs to the eukaryotic ribosomal protein eL31 family.

In Halorubrum lacusprofundi (strain ATCC 49239 / DSM 5036 / JCM 8891 / ACAM 34), this protein is Large ribosomal subunit protein eL31.